The sequence spans 932 residues: Transcriptional regulatory protein DagR (932 aa).

In terms of domain architecture, Sigma-54 factor interaction spans 111 to 343 (LIGYDRSLRD…LKSDIQFLCA (233 aa)). ATP is bound by residues 141–148 (GPSGVGKT) and 210–219 (ADGGYLLLDE). Positions 462–567 (RYGDQIEERV…KECRHYRQRI (106 aa)) constitute a PRD 1 domain. H497 is subject to Phosphohistidine. Residues 572-708 (DCGVILIAHG…PQQENGGKVL (137 aa)) enclose the PTS EIIA type-4 domain. Residue H580 is the Tele-phosphohistidine intermediate of the active site. A PRD 2 domain is found at 835–932 (LNPQRILKEM…YFYIYELLYS (98 aa)). H870 is subject to Phosphohistidine.

Functionally, involved in the regulation of the catabolism of D-glucosaminate. The polypeptide is Transcriptional regulatory protein DagR (dgaR) (Salmonella typhimurium (strain 14028s / SGSC 2262)).